Reading from the N-terminus, the 374-residue chain is Anhydro-N-acetylmuramic acid kinase (374 aa).

Position 12 to 19 (12 to 19 (GTSLDGVD)) interacts with ATP.

The protein belongs to the anhydro-N-acetylmuramic acid kinase family.

It catalyses the reaction 1,6-anhydro-N-acetyl-beta-muramate + ATP + H2O = N-acetyl-D-muramate 6-phosphate + ADP + H(+). It functions in the pathway amino-sugar metabolism; 1,6-anhydro-N-acetylmuramate degradation. It participates in cell wall biogenesis; peptidoglycan recycling. Catalyzes the specific phosphorylation of 1,6-anhydro-N-acetylmuramic acid (anhMurNAc) with the simultaneous cleavage of the 1,6-anhydro ring, generating MurNAc-6-P. Is required for the utilization of anhMurNAc either imported from the medium or derived from its own cell wall murein, and thus plays a role in cell wall recycling. This is Anhydro-N-acetylmuramic acid kinase from Escherichia fergusonii (strain ATCC 35469 / DSM 13698 / CCUG 18766 / IAM 14443 / JCM 21226 / LMG 7866 / NBRC 102419 / NCTC 12128 / CDC 0568-73).